The sequence spans 45 residues: uncharacterized protein (45 aa).

A C2H2-type zinc finger spans residues 2–25 (YQCLRCGGIFNKRREVVEHLLVGH).

This is an uncharacterized protein from Sulfolobus spindle-shape virus 1 (SSV1).